We begin with the raw amino-acid sequence, 168 residues long: Disulfide bond formation protein B 2 (168 aa).

Residues 1–9 (MLPARLRTF) lie on the Cytoplasmic side of the membrane. Residues 10–26 (FLPACLVALAVLVASFR) traverse the membrane as a helical segment. Residues 27–44 (LENTVGLMPCPLCLSQRL) are Periplasmic-facing. Residues C36 and C39 are joined by a disulfide bond. Residues 45-61 (LLGGYALLCFAAVLQAP) traverse the membrane as a helical segment. The Cytoplasmic segment spans residues 62 to 67 (GTRGIL). The helical transmembrane segment at 68-85 (RYARLALGCSLAGALLAA) threads the bilayer. Residues 86–140 (RHVWLQGAEGVNEVCPVPIGRVFEQSWSEAARQLLLGGPDCRSLAWSFLDLTLPE) lie on the Periplasmic side of the membrane. Residues C100 and C126 are joined by a disulfide bond. Residues 141 to 159 (WSLLAFLLLAVLPLSCLLA) traverse the membrane as a helical segment. The Cytoplasmic portion of the chain corresponds to 160–168 (YRFRTLART).

The protein belongs to the DsbB family.

Its subcellular location is the cell inner membrane. Its function is as follows. Required for disulfide bond formation in some periplasmic proteins. Acts by oxidizing the DsbA protein. This chain is Disulfide bond formation protein B 2 (dsbB2), found in Pseudomonas putida (strain ATCC 47054 / DSM 6125 / CFBP 8728 / NCIMB 11950 / KT2440).